The chain runs to 1071 residues: Intracellular phospholipase A2 (1071 aa).

The tract at residues 1–22 (MTTTNKDGPFRQQYLPGVHKEP) is disordered. ANK repeat units lie at residues 411–440 (ENCY…TLFC), 479–508 (DGQS…KFTR), 510–539 (DRNE…EIAN), 544–570 (LGNS…ELGL), 578–610 (AGET…NMNA), 614–651 (HGNT…KINL), and 652–681 (RGES…TRCP). In terms of domain architecture, PNPLA spans 748–921 (ISMDGGGIRG…ISNNPALDLM (174 aa)). The GXGXXG motif lies at 752–757 (GGGIRG). The short motif at 784-788 (GTSTG) is the GXSXG element. The active-site Nucleophile is S786. D908 functions as the Proton acceptor in the catalytic mechanism. Residues 908 to 910 (DGG) carry the DGA/G motif.

Belongs to the patatin family.

It catalyses the reaction a 1,2-diacyl-sn-glycero-3-phosphocholine + H2O = a 1-acyl-sn-glycero-3-phosphocholine + a fatty acid + H(+). In terms of biological role, phospholipase that plays a critical role during oogenesis, ovulation, and/or embryogenesis. This chain is Intracellular phospholipase A2, found in Caenorhabditis elegans.